We begin with the raw amino-acid sequence, 496 residues long: Steroid 21-hydroxylase (496 aa).

Heme b is bound at residue serine 109. Position 232 (arginine 232) interacts with 17alpha-hydroxyprogesterone. Position 232 (arginine 232) interacts with progesterone. Heme b contacts are provided by histidine 364, arginine 425, and cysteine 427.

Belongs to the cytochrome P450 family. Heme b is required as a cofactor.

The protein localises to the endoplasmic reticulum membrane. It localises to the microsome membrane. The catalysed reaction is progesterone + reduced [NADPH--hemoprotein reductase] + O2 = 21-hydroxyprogesterone + oxidized [NADPH--hemoprotein reductase] + H2O + H(+). It catalyses the reaction 17alpha-hydroxyprogesterone + reduced [NADPH--hemoprotein reductase] + O2 = 11-deoxycortisol + oxidized [NADPH--hemoprotein reductase] + H2O + H(+). Its function is as follows. A cytochrome P450 monooxygenase that plays a major role in adrenal steroidogenesis. Catalyzes the hydroxylation at C-21 of progesterone and 17alpha-hydroxyprogesterone to respectively form 11-deoxycorticosterone and 11-deoxycortisol, intermediate metabolites in the biosynthetic pathway of mineralocorticoids and glucocorticoids. Mechanistically, uses molecular oxygen inserting one oxygen atom into a substrate, and reducing the second into a water molecule, with two electrons provided by NADPH via cytochrome P450 reductase (CPR; NADPH-ferrihemoprotein reductase). The sequence is that of Steroid 21-hydroxylase (CYP21) from Bos taurus (Bovine).